The primary structure comprises 238 residues: Trypsin-3 (238 aa).

An N-terminal signal peptide occupies residues 1–7 (FAVAFAA). The propeptide at 8-15 (PIDDEDDK) is activation peptide. One can recognise a Peptidase S1 domain in the interval 16-236 (IVGGYECRKN…YRSWISSTMS (221 aa)). Intrachain disulfides connect Cys22-Cys152, Cys40-Cys56, Cys124-Cys225, Cys131-Cys198, Cys163-Cys177, and Cys188-Cys212. His55 serves as the catalytic Charge relay system. Residues Glu67, Asn69, Val72, and Glu77 each coordinate Ca(2+). Asp99 (charge relay system) is an active-site residue. Ser192 functions as the Charge relay system in the catalytic mechanism.

This sequence belongs to the peptidase S1 family. It depends on Ca(2+) as a cofactor.

The protein localises to the secreted. The protein resides in the extracellular space. The enzyme catalyses Preferential cleavage: Arg-|-Xaa, Lys-|-Xaa.. The sequence is that of Trypsin-3 from Salmo salar (Atlantic salmon).